The primary structure comprises 561 residues: Putative transport protein KPN78578_08530 (561 aa).

A run of 5 helical transmembrane segments spans residues 8 to 28 (LLNGNYILLLFVVLALGLCLG), 37 to 57 (LGNSIGVLVVSLLLGQQHFAI), 66 to 86 (FMLFIFCVGVEAGPNFFSIFF), 94 to 114 (MLALVMVGSAMLIAMVLGKVF), and 158 to 178 (HLSLGYALTYLVGLVSLIVGA). RCK C-terminal domains follow at residues 202–288 (LDTD…SFRN) and 292–373 (VFDR…RIGF). The next 5 helical transmembrane spans lie at 383–403 (LLAFCAFFIVGLMIGMITFQF), 406–426 (FSFGIGNAAGLLFAGIMLGFL), 447–467 (FGLMVFMAGVGLSAGAGINNG), 478–498 (AGLIVSLVPVVICFLFGAYVL), and 540–560 (AIANVLLTLAGTLIVIIWPGL).

It belongs to the AAE transporter (TC 2.A.81) family. YbjL subfamily.

It is found in the cell membrane. The protein is Putative transport protein KPN78578_08530 of Klebsiella pneumoniae subsp. pneumoniae (strain ATCC 700721 / MGH 78578).